The chain runs to 311 residues: 4-diphosphocytidyl-2-C-methyl-D-erythritol kinase (311 aa).

Lys16 is a catalytic residue. Position 101–111 (101–111 (PVAGGMAGGSA)) interacts with ATP. The active site involves Asp143.

The protein belongs to the GHMP kinase family. IspE subfamily.

The enzyme catalyses 4-CDP-2-C-methyl-D-erythritol + ATP = 4-CDP-2-C-methyl-D-erythritol 2-phosphate + ADP + H(+). It participates in isoprenoid biosynthesis; isopentenyl diphosphate biosynthesis via DXP pathway; isopentenyl diphosphate from 1-deoxy-D-xylulose 5-phosphate: step 3/6. Its function is as follows. Catalyzes the phosphorylation of the position 2 hydroxy group of 4-diphosphocytidyl-2C-methyl-D-erythritol. The sequence is that of 4-diphosphocytidyl-2-C-methyl-D-erythritol kinase from Rhodococcus jostii (strain RHA1).